Reading from the N-terminus, the 402-residue chain is Protein arginine methyltransferase NDUFAF7 homolog, mitochondrial (402 aa).

This sequence belongs to the NDUFAF7 family.

The protein resides in the mitochondrion. It carries out the reaction L-arginyl-[protein] + 2 S-adenosyl-L-methionine = N(omega),N(omega)'-dimethyl-L-arginyl-[protein] + 2 S-adenosyl-L-homocysteine + 2 H(+). Functionally, arginine methyltransferase involved in the assembly or stability of mitochondrial NADH:ubiquinone oxidoreductase complex (complex I). The polypeptide is Protein arginine methyltransferase NDUFAF7 homolog, mitochondrial (Saccharomyces cerevisiae (strain ATCC 204508 / S288c) (Baker's yeast)).